A 208-amino-acid chain; its full sequence is Kinetochore protein Spc25 (208 aa).

A coiled-coil region spans residues Ser-31–Gly-101.

Belongs to the SPC25 family. As to quaternary structure, component of the Ndc80 complex, which is composed of Ndc80, Nuf2 and Spc25.

The protein resides in the nucleus. Its subcellular location is the chromosome. It localises to the centromere. It is found in the kinetochore. Its function is as follows. Acts as a component of the essential kinetochore-associated Ndc80 complex, which is required for chromosome segregation and spindle checkpoint activity during meiosis and mitosis. Required for kinetochore integrity and the organization of stable microtubule binding sites in the outer plate of the kinetochore. Participates in SAC signaling that responds specifically to disruptions in spindle microtubule dynamics. The NDC80 complex synergistically enhances the affinity of the SKA1 complex for microtubules and may allow the NDC80 complex to track depolymerizing microtubules. The chain is Kinetochore protein Spc25 from Drosophila mojavensis (Fruit fly).